The primary structure comprises 505 residues: Peroxisome proliferator-activated receptor gamma (505 aa).

A glycan (O-linked (GlcNAc) threonine) is linked at T84. S112 carries the phosphoserine; by MAPK modification. Positions 136-210 (AIECRVCGDK…VGMSHNAIRF (75 aa)) form a DNA-binding region, nuclear receptor. 2 NR C4-type zinc fingers span residues 139–159 (CRVC…CEGC) and 176–198 (CDLN…FQKC). Residues 205–280 (HNAIRFGRMP…DKSPFVIYDM (76 aa)) form an interaction with FAM120B region. One can recognise an NR LBD domain in the interval 238–503 (DLRALAKHLY…HPLLQEIYKD (266 aa)). Residue K252 forms a Glycyl lysine isopeptide (Lys-Gly) (interchain with G-Cter in ubiquitin) linkage. Positions 495-503 (PLLQEIYKD) match the 9aaTAD motif.

The protein belongs to the nuclear hormone receptor family. NR1 subfamily. As to quaternary structure, heterodimer with other nuclear receptors, such as RXRA. The heterodimer with the retinoic acid receptor RXRA is called adipocyte-specific transcription factor ARF6. Interacts with NCOA6 coactivator, leading to a strong increase in transcription of target genes. Interacts with coactivator PPARBP, leading to a mild increase in transcription of target genes. Interacts with NOCA7 in a ligand-inducible manner. Interacts with NCOA1 and NCOA2 LXXLL motifs. Interacts with ASXL1, ASXL2, DNTTIP2, FAM120B, MAP2K1/MEK1, NR0B2, PDPK1, PRDM16, PRMT2 and TGFB1I1. Interacts (when activated by agonist) with PPP5C. Interacts with HELZ2 and THRAP3; the interaction stimulates the transcriptional activity of PPARG. Interacts with PER2, the interaction is ligand dependent and blocks PPARG recruitment to target promoters. Interacts with NOCT. Interacts with FOXO1 (acetylated form). Interacts with ACTN4. Interacts (when in the liganded conformation) with GPS2. Interacts with CRY1 and CRY2 in a ligand-dependent manner. In the absence of hormonal ligand, interacts with TACC1. In macrophages, interacts with PAQR3 and STUB1; the interactions promote PPARG poylubiquitination and STUB1-mediated degradation. In terms of processing, O-GlcNAcylation at Thr-84 reduces transcriptional activity in adipocytes. Phosphorylated in basal conditions and dephosphorylated when treated with the ligand. May be dephosphorylated by PPP5C. The phosphorylated Ser-112 form is recognized by PER2 and repressed, dephosphorylation at Ser-112 induces adipogenic activity. Ser-112 phosphorylation levels are reduced by 65% in brown adipose tissue compared to white adipose tissue. Post-translationally, ubiquitinated by E3 ubiquitin-protein ligase complex containing FBXO9; leading to proteasomal degradation. In terms of processing, ubiquitinated by E3 ubiquitin-protein ligase complex containing FBXO9; leading to proteasomal degradation. Ubiquitinated at Lys-252 by TRIM55 leading to proteasomal degradation. Ubiquitinated by E3 ubiquitin-protein ligase STUB1/CHIP; leading to proteasomal degradation. In terms of tissue distribution, highest expression in white and brown adipose tissue. Also found in liver, skeletal muscle, heart, adrenal gland, spleen, kidney and intestine. Isoform 2 is more abundant than isoform 1 in adipose tissue.

The protein resides in the nucleus. It is found in the cytoplasm. With respect to regulation, PDPK1 activates its transcriptional activity independently of its kinase activity. Functionally, nuclear receptor that binds peroxisome proliferators such as hypolipidemic drugs and fatty acids. Once activated by a ligand, the nuclear receptor binds to DNA specific PPAR response elements (PPRE) and modulates the transcription of its target genes, such as acyl-CoA oxidase. It therefore controls the peroxisomal beta-oxidation pathway of fatty acids. Key regulator of adipocyte differentiation and glucose homeostasis. ARF6 acts as a key regulator of the tissue-specific adipocyte P2 (aP2) enhancer. Acts as a critical regulator of gut homeostasis by suppressing NF-kappa-B-mediated pro-inflammatory responses. Plays a role in the regulation of cardiovascular circadian rhythms by regulating the transcription of BMAL1 in the blood vessels. The sequence is that of Peroxisome proliferator-activated receptor gamma (Pparg) from Mus musculus (Mouse).